The sequence spans 511 residues: Ribonuclease Y (511 aa).

A helical membrane pass occupies residues 3-23 (VGILIGIIILGVVGFIQYTLI). Residues 201–286 (TVHVVALPND…EMVERAIKDV (86 aa)) form the KH domain. One can recognise an HD domain in the interval 327–420 (VLKHSIEVSY…VQAADAISAA (94 aa)).

This sequence belongs to the RNase Y family.

Its subcellular location is the cell membrane. Endoribonuclease that initiates mRNA decay. The polypeptide is Ribonuclease Y (Clostridium perfringens (strain SM101 / Type A)).